The primary structure comprises 409 residues: Probable tRNA N6-adenosine threonylcarbamoyltransferase, mitochondrial (409 aa).

The N-terminal 31 residues, 1–31, are a transit peptide targeting the mitochondrion; the sequence is MHALRNFAGNGIANVFGCGIRRRLSYVLGIE. A divalent metal cation contacts are provided by His-135 and His-139. Substrate contacts are provided by residues 159–163, Asp-192, Gly-212, Glu-216, 322–323, and Ser-350; these read LASGG and NN. Asp-351 serves as a coordination point for a divalent metal cation.

This sequence belongs to the KAE1 / TsaD family. As to quaternary structure, homodimer. Requires a divalent metal cation as cofactor.

It localises to the mitochondrion. The enzyme catalyses L-threonylcarbamoyladenylate + adenosine(37) in tRNA = N(6)-L-threonylcarbamoyladenosine(37) in tRNA + AMP + H(+). In terms of biological role, required for the formation of a threonylcarbamoyl group on adenosine at position 37 (t(6)A37) in mitochondrial tRNAs that read codons beginning with adenine. Probably involved in the transfer of the threonylcarbamoyl moiety of threonylcarbamoyl-AMP (TC-AMP) to the N6 group of A37. Involved in mitochondrial genome maintenance. The polypeptide is Probable tRNA N6-adenosine threonylcarbamoyltransferase, mitochondrial (Drosophila melanogaster (Fruit fly)).